Consider the following 455-residue polypeptide: Oxidative stress induced growth inhibitor homolog osgn-1 (455 aa).

It belongs to the OKL38 family. NADPH is required as a cofactor.

It localises to the midbody. In terms of biological role, monooxygenase catalytic activity. Involved in regulation of cytokinesis; promotes rho-1/RhoA activity, probably acting locally at the midbody in late cytokinesis. Monooxygenase activity is required to stabilize structures between primordial germ cells (PGCs), termed intercellular bridges. Dispensable for fertility. This chain is Oxidative stress induced growth inhibitor homolog osgn-1, found in Caenorhabditis elegans.